We begin with the raw amino-acid sequence, 149 residues long: MAINFSPKVGEILECNFGNYPVSQNGPFSTTYYDGRIPPEMIKNRLVVVLNGKINGNACIVVPLSTTRDQDKLKRGMHVEIASNVINDLQFFDQQIRWAKADLVQQVSRNRLNRARTYRGYLNQCLPHELVADIQRAVIKSINAISLIN.

This is an uncharacterized protein from Escherichia coli (strain K12).